Reading from the N-terminus, the 202-residue chain is Crustacean calcium-binding protein 23 (202 aa).

Residue Ser-1 is modified to N-acetylserine. EF-hand domains follow at residues 33-68, 69-104, 105-140, and 148-185; these read SGLLSLGRLFRRLDKDRSWTLSKEELSRGVGQFGLD, LSDGDINKLFSSFEKDGQSGINYEEFLESLRPEMTE, PRKKAVEAAFKHLDKTGDGVVGLEDIKGKYSAKTHP, and TEDEILKKFLNMFETNTSVDGKVTKKEFFDYYSGLSKA. Ca(2+)-binding residues include Asp-84, Glu-93, Asp-118, Asp-122, and Asp-129.

As to quaternary structure, monomer or disulfide-linked dimers. In terms of tissue distribution, striated muscle and brain.

Functionally, possibly acts as a regulatory protein and not as a calcium buffer or transport protein. In Faxonius limosus (Spinycheek crayfish), this protein is Crustacean calcium-binding protein 23.